The sequence spans 47 residues: PhoP/PhoQ regulator MgrB (47 aa).

Residues 6-26 traverse the membrane as a helical segment; it reads WVALVVVVLACLLLWAQVFNM.

Belongs to the MgrB family. May form homooligomers. Probably interacts with the periplasmic domain of PhoQ.

Its subcellular location is the cell inner membrane. Functionally, phoP-regulated transcription is redox-sensitive, being activated when the periplasm becomes more reducing. MgrB acts between DsbA/DsbB and PhoP/PhoQ in this pathway. Represses PhoP/PhoQ signaling, possibly by binding to the periplasmic domain of PhoQ, altering its activity and that of downstream effector PhoP. The chain is PhoP/PhoQ regulator MgrB from Escherichia coli O1:K1 / APEC.